We begin with the raw amino-acid sequence, 136 residues long: Histone H3 (136 aa).

The interval 1 to 43 (MARTKQTARKSTGGKAPRKQLATKAARKSAPASGGVKKPHRFR) is disordered. N6-methylated lysine is present on lysine 5. Lysine 10 carries the N6-acetyllysine; alternate modification. Lysine 10 is modified (N6-methylated lysine; alternate). At serine 11 the chain carries Phosphoserine. A Phosphothreonine modification is found at threonine 12. Lysine 15 carries the N6-acetyllysine modification. 2 positions are modified to N6-acetyllysine; alternate: lysine 19 and lysine 24. An N6-methylated lysine; alternate mark is found at lysine 19 and lysine 24. Lysine 28 is modified (N6-methylated lysine). Serine 29 carries the post-translational modification Phosphoserine. Lysine 37 bears the N6-methylated lysine mark.

This sequence belongs to the histone H3 family. As to quaternary structure, the nucleosome is a histone octamer containing two molecules each of H2A, H2B, H3 and H4 assembled in one H3-H4 heterotetramer and two H2A-H2B heterodimers. The octamer wraps approximately 147 bp of DNA. In terms of processing, acetylation is generally linked to gene activation. Can be acetylated to form H3K9ac, H3K14ac, H3K18ac and H3K23ac. H3K9ac could compete with H3K9me and prevent gene silencing. H3K9ac is restricted to euchromatin. Methylated to form mainly H3K4me, H3K9me, H3K18me, H3K23me, H3K27me and H3K36me. H3K4me1/2/3, H3K9me3, H3K27me3 and H3K36me1/2/3 are typical marks for euchromatin, whereas heterochromatic chromocenters are enriched in H3K9me1/2 and H3K27me1/2. H2BK143ub1 is probably prerequisite for H3K4me. Post-translationally, can be phosphorylated to form H3S10ph, H3T11ph and H3S28ph.

Its subcellular location is the nucleus. The protein resides in the chromosome. Core component of nucleosome. Nucleosomes wrap and compact DNA into chromatin, limiting DNA accessibility to the cellular machineries which require DNA as a template. Histones thereby play a central role in transcription regulation, DNA repair, DNA replication and chromosomal stability. DNA accessibility is regulated via a complex set of post-translational modifications of histones, also called histone code, and nucleosome remodeling. This chain is Histone H3, found in Griffithsia japonica (Red alga).